Here is a 181-residue protein sequence, read N- to C-terminus: ATP synthase subunit delta (181 aa).

Belongs to the ATPase delta chain family. As to quaternary structure, F-type ATPases have 2 components, F(1) - the catalytic core - and F(0) - the membrane proton channel. F(1) has five subunits: alpha(3), beta(3), gamma(1), delta(1), epsilon(1). CF(0) has four main subunits: a(1), b(1), b'(1) and c(10-14). The alpha and beta chains form an alternating ring which encloses part of the gamma chain. F(1) is attached to F(0) by a central stalk formed by the gamma and epsilon chains, while a peripheral stalk is formed by the delta, b and b' chains.

The protein localises to the cellular thylakoid membrane. Functionally, f(1)F(0) ATP synthase produces ATP from ADP in the presence of a proton or sodium gradient. F-type ATPases consist of two structural domains, F(1) containing the extramembraneous catalytic core and F(0) containing the membrane proton channel, linked together by a central stalk and a peripheral stalk. During catalysis, ATP synthesis in the catalytic domain of F(1) is coupled via a rotary mechanism of the central stalk subunits to proton translocation. In terms of biological role, this protein is part of the stalk that links CF(0) to CF(1). It either transmits conformational changes from CF(0) to CF(1) or is implicated in proton conduction. The protein is ATP synthase subunit delta of Synechococcus sp. (strain RCC307).